Here is a 501-residue protein sequence, read N- to C-terminus: Raftlin-2 (501 aa).

2 disordered regions span residues methionine 1–phenylalanine 20 and serine 196–glutamate 239. Glycine 2 is lipidated: N-myristoyl glycine. Cysteine 3 carries the S-palmitoyl cysteine lipid modification. Over residues glycine 220–serine 233 the composition is skewed to polar residues. Serine 405 carries the phosphoserine modification. Positions alanine 407 to glutamate 449 are disordered. Threonine 409 bears the Phosphothreonine mark. The segment covering proline 410–lysine 425 has biased composition (basic and acidic residues). Polar residues predominate over residues threonine 427–alanine 441. Serine 430 is modified (phosphoserine).

This sequence belongs to the raftlin family.

Its subcellular location is the cell membrane. Upon bacterial lipopolysaccharide stimulation, mediates clathrin-dependent internalization of TLR4 in dendritic cells, resulting in activation of TICAM1-mediated signaling and subsequent IFNB1 production. May regulate B-cell antigen receptor-mediated signaling. In Homo sapiens (Human), this protein is Raftlin-2 (RFTN2).